The chain runs to 311 residues: Phosphoribosylaminoimidazole-succinocarboxamide synthase (311 aa).

It belongs to the SAICAR synthetase family.

It catalyses the reaction 5-amino-1-(5-phospho-D-ribosyl)imidazole-4-carboxylate + L-aspartate + ATP = (2S)-2-[5-amino-1-(5-phospho-beta-D-ribosyl)imidazole-4-carboxamido]succinate + ADP + phosphate + 2 H(+). It functions in the pathway purine metabolism; IMP biosynthesis via de novo pathway; 5-amino-1-(5-phospho-D-ribosyl)imidazole-4-carboxamide from 5-amino-1-(5-phospho-D-ribosyl)imidazole-4-carboxylate: step 1/2. In Azoarcus sp. (strain BH72), this protein is Phosphoribosylaminoimidazole-succinocarboxamide synthase.